Reading from the N-terminus, the 154-residue chain is 6,7-dimethyl-8-ribityllumazine synthase (154 aa).

5-amino-6-(D-ribitylamino)uracil contacts are provided by residues phenylalanine 23, 57–59 (AFE), and 81–83 (AII). (2S)-2-hydroxy-3-oxobutyl phosphate is bound at residue 86–87 (ST). Histidine 89 (proton donor) is an active-site residue. Phenylalanine 114 serves as a coordination point for 5-amino-6-(D-ribitylamino)uracil. Residue arginine 128 participates in (2S)-2-hydroxy-3-oxobutyl phosphate binding.

This sequence belongs to the DMRL synthase family.

The enzyme catalyses (2S)-2-hydroxy-3-oxobutyl phosphate + 5-amino-6-(D-ribitylamino)uracil = 6,7-dimethyl-8-(1-D-ribityl)lumazine + phosphate + 2 H2O + H(+). It functions in the pathway cofactor biosynthesis; riboflavin biosynthesis; riboflavin from 2-hydroxy-3-oxobutyl phosphate and 5-amino-6-(D-ribitylamino)uracil: step 1/2. In terms of biological role, catalyzes the formation of 6,7-dimethyl-8-ribityllumazine by condensation of 5-amino-6-(D-ribitylamino)uracil with 3,4-dihydroxy-2-butanone 4-phosphate. This is the penultimate step in the biosynthesis of riboflavin. The sequence is that of 6,7-dimethyl-8-ribityllumazine synthase from Nitratiruptor sp. (strain SB155-2).